We begin with the raw amino-acid sequence, 946 residues long: DNA primase (946 aa).

The tract at residues 596–626 (RDTEEDEDGKENKNNVPDNGVFQKTTSSVDT) is disordered. A compositionally biased stretch (polar residues) spans 617–626 (FQKTTSSVDT). A CHC2-type zinc finger spans residues 881-920 (CLNYTHRNPQETVQVFIDLRTEHSYALWASLWSRCFTKKC).

It belongs to the herpesviridae DNA primase family. In terms of assembly, associates with the helicase and the primase-associated factor to form the helicase-primase factor. Interacts with host SNAPIN.

Its subcellular location is the host nucleus. Essential component of the helicase/primase complex. Unwinds the DNA at the replication forks and generates single-stranded DNA for both leading and lagging strand synthesis. The primase initiates primer synthesis and thereby produces large amount of short RNA primers on the lagging strand that the polymerase elongates using dNTPs. The chain is DNA primase (UL70) from Homo sapiens (Human).